Reading from the N-terminus, the 505-residue chain is MSEQKPQVAEQAQELNSELQARREKLAALREKGIAFPNDFRREHLSDQLHAEYGEKTNEELEALDIEVTVAGRMMTRRIMGKASFVTLQDVGGRIQLYVSRDDLPEGVYNEEFKKWDLGDILGARGKLFKTKTGELSIHCSELRLLTKALRPLPDKFHGLADQETRYRQRYLDLIANDESRNTFKVRSQVMSGIRRFMVEKGFMEVETPMMQVIPGGASARPFVTHHNALDIDMYLRIAPELYLKRLVVGGFERVFEINRNFRNEGVSPRHNPEFTMMELYMAYADYKDLIALTEELFRTLTETVLGSSVVQYGDQTFDFGKPFAKLTMKEAICKYRPETNVADLDDMDKAVAIAESLGIKVEKSWGLGRVQCEIFEETAESHLIQPTFITEYPAEVSPLARRNDDNPFITDRFEFFIGGREIGNGFSELNDAEDQAQRFADQVSAKEAGDDEAMFYDEDYVTALEHGLPPTAGLGIGIDRMVMLFTNSHTIRDVILFPAMRPVK.

The Mg(2+) site is built by Glu-415 and Glu-422.

This sequence belongs to the class-II aminoacyl-tRNA synthetase family. In terms of assembly, homodimer. Mg(2+) is required as a cofactor.

It is found in the cytoplasm. It carries out the reaction tRNA(Lys) + L-lysine + ATP = L-lysyl-tRNA(Lys) + AMP + diphosphate. The polypeptide is Lysine--tRNA ligase (Yersinia enterocolitica serotype O:8 / biotype 1B (strain NCTC 13174 / 8081)).